The primary structure comprises 215 residues: GTP-binding protein YPT6 (215 aa).

17–24 (GEQGVGKT) is a GTP binding site. Residues 39–47 (YQATIGIDF) carry the Effector region motif. GTP-binding positions include 65 to 69 (DTAGQ) and 124 to 127 (NKSD). Residues 178 to 196 (NSESTPLDSENANSANQNK) are compositionally biased toward polar residues. The disordered stretch occupies residues 178-215 (NSESTPLDSENANSANQNKPGVIDISTAEEQEQSACQC). Residues Cys213 and Cys215 are each lipidated (S-geranylgeranyl cysteine). Cys215 carries the post-translational modification Cysteine methyl ester.

Belongs to the small GTPase superfamily. Rab family. In terms of assembly, interacts with YIF1, YIP3 and YIP4.

Its subcellular location is the cell membrane. Functionally, protein transport. Might participate in post-Golgi transport. The sequence is that of GTP-binding protein YPT6 (YPT6) from Saccharomyces cerevisiae (strain ATCC 204508 / S288c) (Baker's yeast).